Here is a 34-residue protein sequence, read N- to C-terminus: Photosystem I reaction center subunit XII (34 aa).

Residues 9–29 form a helical membrane-spanning segment; sequence LIALSLIVVVHAGVLALRLGI.

The protein belongs to the PsaM family.

It localises to the cellular thylakoid membrane. This is Photosystem I reaction center subunit XII from Prochlorococcus marinus (strain MIT 9312).